Reading from the N-terminus, the 100-residue chain is Large ribosomal subunit protein bL21 (100 aa).

This sequence belongs to the bacterial ribosomal protein bL21 family. In terms of assembly, part of the 50S ribosomal subunit. Contacts protein L20.

This protein binds to 23S rRNA in the presence of protein L20. The chain is Large ribosomal subunit protein bL21 from Ureaplasma parvum serovar 3 (strain ATCC 27815 / 27 / NCTC 11736).